Here is a 131-residue protein sequence, read N- to C-terminus: UPF0146 protein PH0209 (131 aa).

The protein belongs to the UPF0146 family.

This chain is UPF0146 protein PH0209, found in Pyrococcus horikoshii (strain ATCC 700860 / DSM 12428 / JCM 9974 / NBRC 100139 / OT-3).